The primary structure comprises 154 residues: SsrA-binding protein (154 aa).

Belongs to the SmpB family.

It is found in the cytoplasm. Its function is as follows. Required for rescue of stalled ribosomes mediated by trans-translation. Binds to transfer-messenger RNA (tmRNA), required for stable association of tmRNA with ribosomes. tmRNA and SmpB together mimic tRNA shape, replacing the anticodon stem-loop with SmpB. tmRNA is encoded by the ssrA gene; the 2 termini fold to resemble tRNA(Ala) and it encodes a 'tag peptide', a short internal open reading frame. During trans-translation Ala-aminoacylated tmRNA acts like a tRNA, entering the A-site of stalled ribosomes, displacing the stalled mRNA. The ribosome then switches to translate the ORF on the tmRNA; the nascent peptide is terminated with the 'tag peptide' encoded by the tmRNA and targeted for degradation. The ribosome is freed to recommence translation, which seems to be the essential function of trans-translation. In Ruminiclostridium cellulolyticum (strain ATCC 35319 / DSM 5812 / JCM 6584 / H10) (Clostridium cellulolyticum), this protein is SsrA-binding protein.